We begin with the raw amino-acid sequence, 182 residues long: 5-formyltetrahydrofolate cyclo-ligase (182 aa).

A disordered region spans residues 1–21 (MIRQRRRALTPEQQQEMGQQA). Residues 11–21 (PEQQQEMGQQA) are compositionally biased toward polar residues. Residues 128–135 (GMGGGFYD) and Asp-167 contribute to the ATP site.

Belongs to the 5-formyltetrahydrofolate cyclo-ligase family.

The enzyme catalyses (6S)-5-formyl-5,6,7,8-tetrahydrofolate + ATP = (6R)-5,10-methenyltetrahydrofolate + ADP + phosphate. It participates in one-carbon metabolism; tetrahydrofolate interconversion. In terms of biological role, involved in the removal of 5-formyltetrahydrofolate. In vitro, it is a potent inhibitor of various folate-dependent enzymes in the C1 metabolism network and in vivo it might function as a folate storage. 5-formyltetrahydrofolate is also used as an antifolate rescue agent in cancer chemotherapy. Catalyzes the irreversible ATP-dependent transformation of 5-formyltetrahydrofolate (5-CHO-THF) to form 5,10-methenyltetrahydrofolate (5,10-CH=THF). The reverse reaction is catalyzed by the serine hydroxymethyltransferase GlyA (SHMT). The sequence is that of 5-formyltetrahydrofolate cyclo-ligase (ygfA) from Escherichia coli O157:H7.